We begin with the raw amino-acid sequence, 236 residues long: Small ribosomal subunit protein uS3 (236 aa).

A KH type-2 domain is found at I39–R107. A disordered region spans residues A214–V236.

Belongs to the universal ribosomal protein uS3 family. Part of the 30S ribosomal subunit. Forms a tight complex with proteins S10 and S14.

In terms of biological role, binds the lower part of the 30S subunit head. Binds mRNA in the 70S ribosome, positioning it for translation. The chain is Small ribosomal subunit protein uS3 from Bartonella bacilliformis (strain ATCC 35685 / KC583 / Herrer 020/F12,63).